Consider the following 213-residue polypeptide: Thiamine-phosphate synthase (213 aa).

4-amino-2-methyl-5-(diphosphooxymethyl)pyrimidine contacts are provided by residues 38–42 and Asn73; that span reads QLREK. 2 residues coordinate Mg(2+): Asp74 and Asp93. Ser111 is a 4-amino-2-methyl-5-(diphosphooxymethyl)pyrimidine binding site. 137–139 provides a ligand contact to 2-[(2R,5Z)-2-carboxy-4-methylthiazol-5(2H)-ylidene]ethyl phosphate; the sequence is TTS. Position 140 (Lys140) interacts with 4-amino-2-methyl-5-(diphosphooxymethyl)pyrimidine. Residues Gly169 and 189–190 contribute to the 2-[(2R,5Z)-2-carboxy-4-methylthiazol-5(2H)-ylidene]ethyl phosphate site; that span reads IS.

The protein belongs to the thiamine-phosphate synthase family. Mg(2+) is required as a cofactor.

It carries out the reaction 2-[(2R,5Z)-2-carboxy-4-methylthiazol-5(2H)-ylidene]ethyl phosphate + 4-amino-2-methyl-5-(diphosphooxymethyl)pyrimidine + 2 H(+) = thiamine phosphate + CO2 + diphosphate. The catalysed reaction is 2-(2-carboxy-4-methylthiazol-5-yl)ethyl phosphate + 4-amino-2-methyl-5-(diphosphooxymethyl)pyrimidine + 2 H(+) = thiamine phosphate + CO2 + diphosphate. It catalyses the reaction 4-methyl-5-(2-phosphooxyethyl)-thiazole + 4-amino-2-methyl-5-(diphosphooxymethyl)pyrimidine + H(+) = thiamine phosphate + diphosphate. The protein operates within cofactor biosynthesis; thiamine diphosphate biosynthesis; thiamine phosphate from 4-amino-2-methyl-5-diphosphomethylpyrimidine and 4-methyl-5-(2-phosphoethyl)-thiazole: step 1/1. Functionally, condenses 4-methyl-5-(beta-hydroxyethyl)thiazole monophosphate (THZ-P) and 2-methyl-4-amino-5-hydroxymethyl pyrimidine pyrophosphate (HMP-PP) to form thiamine monophosphate (TMP). The polypeptide is Thiamine-phosphate synthase (Lysinibacillus sphaericus (strain C3-41)).